Reading from the N-terminus, the 153-residue chain is Histone H2B.4 (153 aa).

Composition is skewed to basic and acidic residues over residues 1 to 10 and 20 to 54; these read MAPKKDEKPA and AKAEAKPKAEKAAKKAKKEPSKKAAKEPKGDGEKK. The disordered stretch occupies residues 1–60; sequence MAPKKDEKPATAEAGAEAPAKAEAKPKAEKAAKKAKKEPSKKAAKEPKGDGEKKDKKKKK. Residues Lys-41 and Lys-42 each carry the N6-acetyllysine modification. Lys-149 participates in a covalent cross-link: Glycyl lysine isopeptide (Lys-Gly) (interchain with G-Cter in ubiquitin).

Belongs to the histone H2B family. As to quaternary structure, the nucleosome is a histone octamer containing two molecules each of H2A, H2B, H3 and H4 assembled in one H3-H4 heterotetramer and two H2A-H2B heterodimers. The octamer wraps approximately 147 bp of DNA. Post-translationally, the N-terminus is blocked. Can be acetylated to form H2BK33ac and H2BK34ac. Acetylated mainly on the ubiquitinated form. In terms of processing, monoubiquitinated to form H2BK143ub1; which is increased during the light period and may give a specific tag for epigenetic transcriptional activation.

The protein localises to the nucleus. The protein resides in the chromosome. Its function is as follows. Core component of nucleosome. Nucleosomes wrap and compact DNA into chromatin, limiting DNA accessibility to the cellular machineries which require DNA as a template. Histones thereby play a central role in transcription regulation, DNA repair, DNA replication and chromosomal stability. DNA accessibility is regulated via a complex set of post-translational modifications of histones, also called histone code, and nucleosome remodeling. This Chlamydomonas reinhardtii (Chlamydomonas smithii) protein is Histone H2B.4.